A 185-amino-acid polypeptide reads, in one-letter code: Translation initiation factor IF-3 (185 aa).

Belongs to the IF-3 family. Monomer.

Its subcellular location is the cytoplasm. Its function is as follows. IF-3 binds to the 30S ribosomal subunit and shifts the equilibrium between 70S ribosomes and their 50S and 30S subunits in favor of the free subunits, thus enhancing the availability of 30S subunits on which protein synthesis initiation begins. This chain is Translation initiation factor IF-3, found in Streptococcus pneumoniae (strain Hungary19A-6).